The primary structure comprises 1888 residues: E3 ubiquitin-protein ligase UBR3 (1888 aa).

The segment at 1–24 is disordered; the sequence is MAAAAAAAVGGQQPSQPELPAPGL. A UBR-type zinc finger spans residues 118 to 189; the sequence is ALCGLVWTAN…ESGFCKRHQI (72 aa). The segment at 339–362 is disordered; that stretch reads GQVDSSDEDDQDGSQGLGKRKRVK. 2 positions are modified to phosphoserine: serine 343 and serine 344. The next 2 helical transmembrane spans lie at 761-781 and 919-939; these read MLEGALTFLVILLSLRLHLGM and LLHCKTLHIVLFTLLYKILMD. 2 disordered regions span residues 1008 to 1028 and 1164 to 1186; these read APEVKRDSPASTSSDNLGSLQ and VPPKKVTAAEKKTLDKEERRQKA. The segment covering 1016 to 1028 has biased composition (polar residues); that stretch reads PASTSSDNLGSLQ. A coiled-coil region spans residues 1168–1199; the sequence is KVTAAEKKTLDKEERRQKARERQQKLLAEFAS. Over residues 1170 to 1186 the composition is skewed to basic and acidic residues; sequence TAAEKKTLDKEERRQKA. Serine 1199 carries the phosphoserine modification. The segment at 1306–1364 adopts an RING-type; degenerate zinc-finger fold; the sequence is DSSCLLAVSIGWEGGVYVQTCGHTLHIDCHKSYMESLRNDQVLQGFSVDKGEFTCPLCR. A helical membrane pass occupies residues 1806 to 1826; the sequence is QNCGAGTGIFLLINASVIIII.

It belongs to the E3 ubiquitin-protein ligase UBR1-like family. As to quaternary structure, interacts with UBE2A and UBE2B.

The protein resides in the membrane. The catalysed reaction is S-ubiquitinyl-[E2 ubiquitin-conjugating enzyme]-L-cysteine + [acceptor protein]-L-lysine = [E2 ubiquitin-conjugating enzyme]-L-cysteine + N(6)-ubiquitinyl-[acceptor protein]-L-lysine.. It participates in protein modification; protein ubiquitination. Its function is as follows. E3 ubiquitin-protein ligase which is a component of the N-end rule pathway. Does not bind to proteins bearing specific N-terminal residues that are destabilizing according to the N-end rule, leading to their ubiquitination and subsequent degradation. May play a role in Shh signaling by mediating the ubiquitination of Kif7. May be important for MYH9 function in certain tissues, possibly by regulating the ubiquitination of MYH9 and consequently affecting its interaction with MYO7A. In Homo sapiens (Human), this protein is E3 ubiquitin-protein ligase UBR3 (UBR3).